Here is a 1703-residue protein sequence, read N- to C-terminus: Stress response protein NST1 (1703 aa).

12 disordered regions span residues 1-91 (MAKS…AKDA), 243-288 (DQPL…PLPP), 347-484 (HALR…IWST), 566-724 (VSSG…GLGS), 759-807 (MHRE…EQRM), 843-1292 (LREL…LGAP), 1353-1407 (FSPM…IGPI), 1424-1465 (HTGA…DIID), 1516-1537 (SSFS…NGGG), 1558-1581 (ASTP…PWAR), 1595-1637 (EQPG…HHQL), and 1672-1703 (GAPG…GSHE). Over residues 7-36 (PRSTPAARAAAVPPPRLAAAAQQQHHQQQP) the composition is skewed to low complexity. Pro residues predominate over residues 37–48 (PSTPPAPVPPTK). Residues 57 to 66 (PPRSASPVSN) are compositionally biased toward polar residues. Positions 77–86 (AKKKKKKSKS) are enriched in basic residues. The span at 253 to 273 (NTANNAHPTNVNGAYGQYSSS) shows a compositional bias: polar residues. Residues 274–288 (PNPPPTQPPVEPLPP) are compositionally biased toward pro residues. Residues 365–376 (SKNKKKKKKKKG) are compositionally biased toward basic residues. The segment covering 384–393 (HGDDEAHEIE) has biased composition (basic and acidic residues). Residues 396–409 (VPPPKPVPNHPPPS) are compositionally biased toward pro residues. Low complexity-rich tracts occupy residues 410-419 (TNVSSVARNS) and 453-464 (SSNSGKRSVSSS). A compositionally biased stretch (pro residues) spans 572-581 (IPPPPGPGPF). Residues 614-650 (THTHTHAHTHTHTHTHTHTHTHAHQHPHPHPHGRKAS) show a composition bias toward basic residues. Over residues 657 to 690 (DGYDDDELDDDAEYDDDDDDADYDDEDEDDDVEL) the composition is skewed to acidic residues. Residues 691-703 (EKERAREDYDKRN) are compositionally biased toward basic and acidic residues. Residues 748–1031 (LEMMEQLAER…AKQAAAAASR (284 aa)) adopt a coiled-coil conformation. Residues 771-802 (ASDDEDDVDGPDDVDDEDLDEEDEDEEDEILT) are compositionally biased toward acidic residues. 3 stretches are compositionally biased toward basic and acidic residues: residues 853-866 (EKAR…ESQK), 874-896 (QREA…EAEV), and 904-1023 (RDAE…REAK). Composition is skewed to low complexity over residues 1024–1037 (QAAA…SAAQ) and 1111–1135 (AGGL…AVGS). Residues 1138–1148 (PAPPQGLPPRP) are compositionally biased toward pro residues. The span at 1158 to 1167 (SSSQTSSVSV) shows a compositional bias: low complexity. The segment covering 1200–1219 (LNAQSNVPMPSAKTPGSSIS) has biased composition (polar residues). Over residues 1269–1291 (QNSGMFGSNGSMSSSLQSPSLGA) the composition is skewed to low complexity. The span at 1431 to 1444 (GRSSSTTSGSGATS) shows a compositional bias: low complexity. Gly residues predominate over residues 1598 to 1619 (GGNGVGAGSNGGTPSGLGGIGG).

This sequence belongs to the NST1 family.

It is found in the cytoplasm. Its function is as follows. May act as a negative regulator of salt tolerance. The sequence is that of Stress response protein NST1 (NST1) from Mycosarcoma maydis (Corn smut fungus).